The sequence spans 78 residues: Teretoxin Tsu6.15 (78 aa).

The N-terminal stretch at methionine 1 to leucine 21 is a signal peptide. A propeptide spanning residues glycine 22 to arginine 47 is cleaved from the precursor.

It belongs to the teretoxin M (TM) superfamily. Contains 3 disulfide bonds. In terms of tissue distribution, expressed by the venom duct.

It is found in the secreted. The sequence is that of Teretoxin Tsu6.15 from Terebra subulata (Chocolate spotted auger).